Here is a 310-residue protein sequence, read N- to C-terminus: Aspartate carbamoyltransferase catalytic subunit 2 (310 aa).

The carbamoyl phosphate site is built by Arg55 and Thr56. Lys85 is a binding site for L-aspartate. Residues Arg106, His134, and Gln137 each coordinate carbamoyl phosphate. Residues Arg167 and Arg228 each contribute to the L-aspartate site. Carbamoyl phosphate is bound by residues Leu266 and Pro267.

It belongs to the aspartate/ornithine carbamoyltransferase superfamily. ATCase family. Heterododecamer (2C3:3R2) of six catalytic PyrB chains organized as two trimers (C3), and six regulatory PyrI chains organized as three dimers (R2).

It catalyses the reaction carbamoyl phosphate + L-aspartate = N-carbamoyl-L-aspartate + phosphate + H(+). The protein operates within pyrimidine metabolism; UMP biosynthesis via de novo pathway; (S)-dihydroorotate from bicarbonate: step 2/3. Catalyzes the condensation of carbamoyl phosphate and aspartate to form carbamoyl aspartate and inorganic phosphate, the committed step in the de novo pyrimidine nucleotide biosynthesis pathway. In Shewanella halifaxensis (strain HAW-EB4), this protein is Aspartate carbamoyltransferase catalytic subunit 2.